Reading from the N-terminus, the 473-residue chain is Photosystem II CP43 reaction center protein (473 aa).

Positions methionine 1–glutamate 14 are excised as a propeptide. Residue threonine 15 is modified to N-acetylthreonine. Threonine 15 carries the post-translational modification Phosphothreonine. 5 helical membrane-spanning segments follow: residues leucine 69–alanine 93, leucine 134–asparagine 155, lysine 178–threonine 200, lysine 255–serine 275, and tryptophan 291–alanine 312. Glutamate 367 is a binding site for [CaMn4O5] cluster. A helical membrane pass occupies residues arginine 447–proline 471.

The protein belongs to the PsbB/PsbC family. PsbC subfamily. PSII is composed of 1 copy each of membrane proteins PsbA, PsbB, PsbC, PsbD, PsbE, PsbF, PsbH, PsbI, PsbJ, PsbK, PsbL, PsbM, PsbT, PsbX, PsbY, PsbZ, Psb30/Ycf12, at least 3 peripheral proteins of the oxygen-evolving complex and a large number of cofactors. It forms dimeric complexes. Binds multiple chlorophylls and provides some of the ligands for the Ca-4Mn-5O cluster of the oxygen-evolving complex. It may also provide a ligand for a Cl- that is required for oxygen evolution. PSII binds additional chlorophylls, carotenoids and specific lipids. serves as cofactor.

Its subcellular location is the plastid. The protein localises to the chloroplast thylakoid membrane. One of the components of the core complex of photosystem II (PSII). It binds chlorophyll and helps catalyze the primary light-induced photochemical processes of PSII. PSII is a light-driven water:plastoquinone oxidoreductase, using light energy to abstract electrons from H(2)O, generating O(2) and a proton gradient subsequently used for ATP formation. The polypeptide is Photosystem II CP43 reaction center protein (Illicium oligandrum (Star anise)).